Reading from the N-terminus, the 1012-residue chain is Cellulose synthase-like protein D5 (1012 aa).

Residues 1–81 (MSVDYANYTV…ARVPAPSSNK (81 aa)) are disordered. Low complexity predominate over residues 20-37 (PSGGAPPAAPSAGGARPG). Residues 57–69 (GGGDDGAKMDRRL) show a composition bias toward basic and acidic residues. 2 helical membrane-spanning segments follow: residues 150–170 (ILSP…LFLV) and 180–200 (ALWL…SWLL). Asp280 is a catalytic residue. Residues 597 to 620 (PRQGSEAMPGAGGGRSGGGSVGGD) form a disordered region. Positions 606–618 (GAGGGRSGGGSVG) are enriched in gly residues. Asp717 is an active-site residue. Helical transmembrane passes span 799 to 819 (LFLI…QFIV), 825 to 845 (TFLS…LLEV), 871 to 891 (LAAV…SFTL), 914 to 934 (SLFI…VVGV), 948 to 968 (LLGG…FAKG), and 978 to 998 (TIVY…WITI).

The protein belongs to the glycosyltransferase 2 family. Plant cellulose synthase-like D subfamily.

The protein resides in the golgi apparatus membrane. Its function is as follows. Thought to be a Golgi-localized beta-glycan synthase that polymerize the backbones of noncellulosic polysaccharides (hemicelluloses) of plant cell wall. The sequence is that of Cellulose synthase-like protein D5 (CSLD5) from Oryza sativa subsp. japonica (Rice).